A 151-amino-acid polypeptide reads, in one-letter code: Ribonuclease H (151 aa).

An RNase H type-1 domain is found at 5-146; it reads ALPHVTIFTD…ADQLAREGVA (142 aa). 4 residues coordinate Mg(2+): Asp14, Glu52, Asp74, and Asp138.

It belongs to the RNase H family. As to quaternary structure, monomer. The cofactor is Mg(2+).

The protein localises to the cytoplasm. The catalysed reaction is Endonucleolytic cleavage to 5'-phosphomonoester.. Endonuclease that specifically degrades the RNA of RNA-DNA hybrids. This is Ribonuclease H from Nitrobacter hamburgensis (strain DSM 10229 / NCIMB 13809 / X14).